The chain runs to 353 residues: Variable large protein 12 (353 aa).

Positions Met1 to Ser18 are cleaved as a signal peptide. Cys19 carries the N-palmitoyl cysteine lipid modification. The S-diacylglycerol cysteine moiety is linked to residue Cys19.

It belongs to the variable large protein (Vlp) family. Beta subfamily.

It localises to the cell outer membrane. The Vlp and Vsp proteins are antigenically distinct proteins, only one vlp or vsp gene is transcriptionally active at any one time. Switching between these genes is a mechanism of host immune response evasion. In Borrelia hermsii, this protein is Variable large protein 12.